Reading from the N-terminus, the 297-residue chain is Homoserine kinase (297 aa).

ATP is bound at residue 85–95 (PPTRGMGSSSA).

The protein belongs to the GHMP kinase family. Homoserine kinase subfamily.

The protein localises to the cytoplasm. It carries out the reaction L-homoserine + ATP = O-phospho-L-homoserine + ADP + H(+). It participates in amino-acid biosynthesis; L-threonine biosynthesis; L-threonine from L-aspartate: step 4/5. Catalyzes the ATP-dependent phosphorylation of L-homoserine to L-homoserine phosphate. The polypeptide is Homoserine kinase (Desulfitobacterium hafniense (strain DSM 10664 / DCB-2)).